The sequence spans 379 residues: Caffeyl-CoA reductase-Etf complex subunit CarC (379 aa).

FAD is bound by residues 122–131 (FALTEPGAGS) and 155–157 (FIT). Serine 131 serves as a coordination point for substrate. 239–242 (DVGR) contacts substrate. FAD is bound by residues arginine 267, glutamine 278, and 335 to 339 (QIHGG). The active-site Proton acceptor is the glutamate 362. Glycine 363 contributes to the substrate binding site. Residue 364–366 (TSQ) coordinates FAD.

This sequence belongs to the acyl-CoA dehydrogenase family. As to quaternary structure, part of the homotrimeric caffeyl-CoA reductase-Etf complex composed of (R)-2-hydroxyisocaproyl-CoA dehydratase CarC, and the electron transfer flavoprotein (ETF) alpha (CarE) and beta (CarD) subunits. Requires FAD as cofactor.

The protein resides in the cytoplasm. The enzyme catalyses hydrocaffeoyl-CoA + 2 reduced [2Fe-2S]-[ferredoxin] + 2 NAD(+) = (E)-caffeoyl-CoA + 2 oxidized [2Fe-2S]-[ferredoxin] + 2 NADH. In terms of biological role, the Caffeyl-CoA reductase-Etf complex catalyzes the reduction of caffeyl-CoA to yield hydrocaffeyl-CoA. It couples the endergonic ferredoxin reduction with NADH as reductant to the exergonic reduction of caffeoyl-CoA with the same reductant. It uses the mechanism of electron bifurcation to overcome the steep energy barrier in ferredoxin reduction. Also reduces 4-coumaroyl-CoA and feruloyl-CoA. This Acetobacterium woodii (strain ATCC 29683 / DSM 1030 / JCM 2381 / KCTC 1655 / WB1) protein is Caffeyl-CoA reductase-Etf complex subunit CarC.